Here is a 982-residue protein sequence, read N- to C-terminus: Filament-like plant protein 4 (982 aa).

Coiled-coil stretches lie at residues 39–83 (DQYT…VAKE) and 125–291 (EDRA…RKKL). Positions 311–333 (DHRQDHRQRRSPVRPSSPLMSPM) are disordered. Low complexity predominate over residues 323–333 (VRPSSPLMSPM). The stretch at 345–401 (DNMQKFHKENDLLTERLLAMEEETKMLKEALAKRNSELQVSRNLCAKTANRLQTLEA) forms a coiled coil. Polar residues predominate over residues 423–433 (QNASNPPSMAS). Disordered stretches follow at residues 423-466 (QNAS…AKIK) and 687-711 (QKDS…PDDC). A coiled-coil region spans residues 452–475 (ELSQSNKDKANAKIKKTESANQLE). Positions 457–466 (NKDKANAKIK) are enriched in basic and acidic residues. The segment covering 693–705 (EHYQNGCSQSSDS) has biased composition (polar residues). A coiled-coil region spans residues 722-885 (ATCKFTTEEF…AECQETILLL (164 aa)). Composition is skewed to polar residues over residues 896–910 (TEQV…QQAL) and 918–943 (ATST…NTMK). The segment at 896-982 (TEQVASSPSQ…FSRFFSTKAK (87 aa)) is disordered.

The protein belongs to the FPP family. In terms of assembly, interacts with WPP/MAF proteins.

The protein is Filament-like plant protein 4 (FPP4) of Arabidopsis thaliana (Mouse-ear cress).